We begin with the raw amino-acid sequence, 58 residues long: Protein YecU (58 aa).

This chain is Protein YecU, found in Escherichia coli (strain K12).